A 515-amino-acid chain; its full sequence is Probable cytosol aminopeptidase (515 aa).

2 residues coordinate Mn(2+): lysine 279 and aspartate 284. The active site involves lysine 291. Residues aspartate 302, aspartate 361, and glutamate 363 each coordinate Mn(2+). Arginine 365 is an active-site residue.

The protein belongs to the peptidase M17 family. It depends on Mn(2+) as a cofactor.

The protein localises to the cytoplasm. The catalysed reaction is Release of an N-terminal amino acid, Xaa-|-Yaa-, in which Xaa is preferably Leu, but may be other amino acids including Pro although not Arg or Lys, and Yaa may be Pro. Amino acid amides and methyl esters are also readily hydrolyzed, but rates on arylamides are exceedingly low.. The enzyme catalyses Release of an N-terminal amino acid, preferentially leucine, but not glutamic or aspartic acids.. In terms of biological role, presumably involved in the processing and regular turnover of intracellular proteins. Catalyzes the removal of unsubstituted N-terminal amino acids from various peptides. This is Probable cytosol aminopeptidase from Mycobacterium bovis (strain ATCC BAA-935 / AF2122/97).